The following is a 398-amino-acid chain: Chalcone synthase (398 aa).

Residue Cys167 is part of the active site.

The protein belongs to the thiolase-like superfamily. Chalcone/stilbene synthases family.

The enzyme catalyses (E)-4-coumaroyl-CoA + 3 malonyl-CoA + 3 H(+) = 2',4,4',6'-tetrahydroxychalcone + 3 CO2 + 4 CoA. The protein operates within secondary metabolite biosynthesis; flavonoid biosynthesis. The primary product of this enzyme is 4,2',4',6'-tetrahydroxychalcone (also termed naringenin-chalcone or chalcone) which can under specific conditions spontaneously isomerize into naringenin. This chain is Chalcone synthase (CHS), found in Callistephus chinensis (China aster).